The sequence spans 144 residues: NADH dehydrogenase [ubiquinone] 1 alpha subcomplex subunit 13 (144 aa).

The chain crosses the membrane as a helical span at residues 30-51; that stretch reads LSGYSMLALGIGTLIYGHWSMM.

The protein belongs to the complex I NDUFA13 subunit family. In terms of assembly, complex I is composed of 45 different subunits. Interacts with CARD15, but not with CARD4. Interacts with STAT3, but not with STAT1, STAT2 and STAT5A. Interacts with OLFM4.

The protein localises to the mitochondrion inner membrane. Its subcellular location is the nucleus. Accessory subunit of the mitochondrial membrane respiratory chain NADH dehydrogenase (Complex I), that is believed not to be involved in catalysis. Complex I functions in the transfer of electrons from NADH to the respiratory chain. The immediate electron acceptor for the enzyme is believed to be ubiquinone. Involved in the interferon/all-trans-retinoic acid (IFN/RA) induced cell death. This apoptotic activity is inhibited by interaction with viral IRF1. Prevents the transactivation of STAT3 target genes. May play a role in CARD15-mediated innate mucosal responses and serve to regulate intestinal epithelial cell responses to microbes. The protein is NADH dehydrogenase [ubiquinone] 1 alpha subcomplex subunit 13 (NDUFA13) of Pongo pygmaeus (Bornean orangutan).